A 640-amino-acid chain; its full sequence is 1,4-alpha-glucan branching enzyme GlgB (640 aa).

The Nucleophile role is filled by D318. E371 acts as the Proton donor in catalysis.

It belongs to the glycosyl hydrolase 13 family. GlgB subfamily. In terms of assembly, monomer.

It carries out the reaction Transfers a segment of a (1-&gt;4)-alpha-D-glucan chain to a primary hydroxy group in a similar glucan chain.. Its pathway is glycan biosynthesis; glycogen biosynthesis. In terms of biological role, catalyzes the formation of the alpha-1,6-glucosidic linkages in glycogen by scission of a 1,4-alpha-linked oligosaccharide from growing alpha-1,4-glucan chains and the subsequent attachment of the oligosaccharide to the alpha-1,6 position. The polypeptide is 1,4-alpha-glucan branching enzyme GlgB (Francisella tularensis subsp. holarctica (strain LVS)).